Reading from the N-terminus, the 405-residue chain is Phosphopentomutase (405 aa).

The Mn(2+) site is built by Asp10, Asp303, His308, Asp344, His345, and His356.

This sequence belongs to the phosphopentomutase family. It depends on Mn(2+) as a cofactor.

The protein resides in the cytoplasm. The catalysed reaction is 2-deoxy-alpha-D-ribose 1-phosphate = 2-deoxy-D-ribose 5-phosphate. It carries out the reaction alpha-D-ribose 1-phosphate = D-ribose 5-phosphate. The protein operates within carbohydrate degradation; 2-deoxy-D-ribose 1-phosphate degradation; D-glyceraldehyde 3-phosphate and acetaldehyde from 2-deoxy-alpha-D-ribose 1-phosphate: step 1/2. In terms of biological role, isomerase that catalyzes the conversion of deoxy-ribose 1-phosphate (dRib-1-P) and ribose 1-phosphate (Rib-1-P) to deoxy-ribose 5-phosphate (dRib-5-P) and ribose 5-phosphate (Rib-5-P), respectively. The sequence is that of Phosphopentomutase from Shewanella sediminis (strain HAW-EB3).